The following is a 148-amino-acid chain: Cuticle protein CP1499 (148 aa).

Calcified shell.

This chain is Cuticle protein CP1499, found in Cancer pagurus (Rock crab).